A 192-amino-acid polypeptide reads, in one-letter code: N-terminal acetyltransferase A complex catalytic subunit NAA10 (192 aa).

The N-acetyltransferase domain maps to 2 to 152 (VCIRRATVDD…DAYDMRKNLK (151 aa)).

The protein belongs to the acetyltransferase family. ARD1 subfamily. As to quaternary structure, part of the NatA complex. Interacts with NAA15. As to expression, expressed in leaves, roots, shoots and flowers.

The enzyme catalyses N-terminal glycyl-[protein] + acetyl-CoA = N-terminal N(alpha)-acetylglycyl-[protein] + CoA + H(+). It carries out the reaction N-terminal L-alanyl-[protein] + acetyl-CoA = N-terminal N(alpha)-acetyl-L-alanyl-[protein] + CoA + H(+). It catalyses the reaction N-terminal L-seryl-[protein] + acetyl-CoA = N-terminal N(alpha)-acetyl-L-seryl-[protein] + CoA + H(+). The catalysed reaction is N-terminal L-valyl-[protein] + acetyl-CoA = N-terminal N(alpha)-acetyl-L-valyl-[protein] + CoA + H(+). The enzyme catalyses N-terminal L-cysteinyl-[protein] + acetyl-CoA = N-terminal N(alpha)-acetyl-L-cysteinyl-[protein] + CoA + H(+). It carries out the reaction N-terminal L-threonyl-[protein] + acetyl-CoA = N-terminal N(alpha)-acetyl-L-threonyl-[protein] + CoA + H(+). In terms of biological role, catalytic subunit of the NatA N-alpha-acetyltransferase complex. Required for male gametocyte development, embryogenesis, suspensor development and the formation of the quiescent center (QC) in the root meristem. Involved in plant immunity through the regulation of SNC1 and RPM1 stability. This chain is N-terminal acetyltransferase A complex catalytic subunit NAA10, found in Arabidopsis thaliana (Mouse-ear cress).